A 573-amino-acid chain; its full sequence is Ribosomal RNA-processing protein 9 (573 aa).

Positions 1-63 (MSDVTQQKKR…FEGENPADKR (63 aa)) are disordered. Ser2 is subject to N-acetylserine. The span at 25 to 58 (DEEITDPSSNEDEQLEVSDEEDALESEEEFEGEN) shows a compositional bias: acidic residues. The stretch at 32–106 (SSNEDEQLEV…KERTIDEYNN (75 aa)) forms a coiled coil. A Phosphoserine modification is found at Ser50. 6 WD repeats span residues 234-273 (GHYD…PVKV), 278-317 (DRRG…QLEI), 320-359 (GHHD…RLTF), 397-435 (FCEG…PIFT), 471-509 (QPFW…RSFE), and 516-562 (GAKG…ARNG).

The protein belongs to the WD repeat RRP9 family. As to quaternary structure, interacts with UTP25. Component of the ribosomal small subunit (SSU) processome composed of at least 40 protein subunits and snoRNA U3.

It localises to the nucleus. The protein localises to the nucleolus. Involved in nucleolar processing of pre-18S ribosomal RNA. Required for efficient pre-rRNA cleavage at sites A0, A1 and A2, and biosynthesis of 18S rRNA. This is Ribosomal RNA-processing protein 9 (RRP9) from Saccharomyces cerevisiae (strain ATCC 204508 / S288c) (Baker's yeast).